A 775-amino-acid polypeptide reads, in one-letter code: 5-methyltetrahydropteroyltriglutamate--homocysteine methyltransferase (775 aa).

5-methyltetrahydropteroyltri-L-glutamate-binding positions include 16 to 19 and Lys-115; that span reads REMK. L-homocysteine-binding positions include 435-437 and Glu-488; that span reads IGS. Residues 435-437 and Glu-488 each bind L-methionine; that span reads IGS. 5-methyltetrahydropteroyltri-L-glutamate is bound by residues 519–520 and Trp-565; that span reads RC. Asp-603 is an L-homocysteine binding site. Asp-603 contacts L-methionine. 5-methyltetrahydropteroyltri-L-glutamate is bound at residue Glu-609. Positions 645, 647, and 669 each coordinate Zn(2+). His-698 (proton donor) is an active-site residue. A Zn(2+)-binding site is contributed by Cys-730.

This sequence belongs to the vitamin-B12 independent methionine synthase family. Zn(2+) is required as a cofactor.

It carries out the reaction 5-methyltetrahydropteroyltri-L-glutamate + L-homocysteine = tetrahydropteroyltri-L-glutamate + L-methionine. The protein operates within amino-acid biosynthesis; L-methionine biosynthesis via de novo pathway; L-methionine from L-homocysteine (MetE route): step 1/1. In terms of biological role, catalyzes the transfer of a methyl group from 5-methyltetrahydrofolate to homocysteine resulting in methionine formation. The chain is 5-methyltetrahydropteroyltriglutamate--homocysteine methyltransferase from Coxiella burnetii (strain RSA 331 / Henzerling II).